A 583-amino-acid chain; its full sequence is Alpha-1,3-arabinosyltransferase XAT2 (583 aa).

The Cytoplasmic portion of the chain corresponds to 1-21 (MKPVERAKLVRSLRQESRRLR). The chain crosses the membrane as a helical; Signal-anchor for type II membrane protein span at residues 22-42 (LLVLVIGFFLVTLTFVVISKP). Topologically, residues 43 to 583 (DALLFNLNGR…LLEVLDQLNQ (541 aa)) are lumenal. The disordered stretch occupies residues 73–178 (RRSADTFPAA…NGKQEDGKPN (106 aa)). Basic and acidic residues-rich tracts occupy residues 102–121 (TSEEEKRLLSSEPEQGKNEE) and 135–146 (EDNKNGEEEGHT). Positions 149–160 (SKVTLPTVSNYT) are enriched in polar residues. N-linked (GlcNAc...) asparagine glycosylation is present at Asn158. Basic and acidic residues predominate over residues 162–178 (RDAEDTDNGKQEDGKPN). N-linked (GlcNAc...) asparagine glycosylation is found at Asn229, Asn382, Asn450, and Asn485.

This sequence belongs to the glycosyltransferase 61 family.

The protein resides in the golgi apparatus membrane. Its pathway is glycan metabolism. Its function is as follows. Glycosyltransferase involved in the arabinosylation of xylan, the major hemicellulose (non-cellulosic component) of primary and secondary walls of angiosperms. Possesses alpha-1,3-arabinosyltransferase activity, transferring an arabinofuranose residue to the xylan backbone. This chain is Alpha-1,3-arabinosyltransferase XAT2, found in Oryza sativa subsp. japonica (Rice).